The following is a 535-amino-acid chain: Heat shock factor protein 2 (535 aa).

Residues lysine 2, lysine 82, lysine 135, lysine 139, lysine 151, lysine 210, lysine 218, and lysine 237 each participate in a glycyl lysine isopeptide (Lys-Gly) (interchain with G-Cter in SUMO2) cross-link. The DNA-binding element occupies 7–112; that stretch reads VPAFLSKLWT…LLENIKRKVS (106 aa). The hydrophobic repeat HR-A/B stretch occupies residues 119–192; sequence NKIRQEDLTK…VTLVQNNQLV (74 aa). A disordered region spans residues 298–325; that stretch reads QSGEQSEPAREPLRVGSAGSSSPLMSSA. Low complexity predominate over residues 313–325; it reads GSAGSSSPLMSSA. The hydrophobic repeat HR-C stretch occupies residues 359-384; the sequence is LLDYLDSIDCSLEDFQAMLSGRQFSI. Residues 418 to 437 form a disordered region; that stretch reads TKSSVVQHVSEEGRKSKSKP. Residues 426–437 show a composition bias toward basic and acidic residues; the sequence is VSEEGRKSKSKP.

This sequence belongs to the HSF family. In terms of assembly, DNA-binding homotrimer in stressed or heat shocked cells, otherwise found as a homodimer. As to expression, isoform alpha is expressed predominantly in testis while isoform beta is expressed predominantly in heart and brain.

The protein resides in the cytoplasm. It is found in the nucleus. Its function is as follows. DNA-binding protein that specifically binds heat shock promoter elements (HSE) and activates transcription. In higher eukaryotes, HSF is unable to bind to the HSE unless the cells are heat shocked. HSF2 is expressed in a form that binds DNA constitutively but loses DNA binding by incubation at greater than 41 degrees C. This is Heat shock factor protein 2 (Hsf2) from Mus musculus (Mouse).